We begin with the raw amino-acid sequence, 325 residues long: Glucosyl-3-phosphoglycerate synthase (325 aa).

Residues 37-41 (PSLNE), S71, K104, and 124-125 (DS) contribute to the UDP-alpha-D-glucose site. Residue D126 participates in Mn(2+) binding. (2R)-3-phosphoglycerate is bound at residue 171–174 (GRVT). UDP-alpha-D-glucose is bound by residues 216–219 (YGVE) and 243–248 (RIHDNQ). Residue H245 participates in Mn(2+) binding. N247 provides a ligand contact to (2R)-3-phosphoglycerate.

It belongs to the glycosyltransferase 2 family. As to quaternary structure, homodimer in solution. It depends on Co(2+) as a cofactor. Requires Mg(2+) as cofactor. Mn(2+) is required as a cofactor. The cofactor is Ni(2+). Zn(2+) serves as cofactor.

The catalysed reaction is an NDP-alpha-D-glucose + (2R)-3-phosphoglycerate = (2R)-2-O-(alpha-D-glucopyranosyl)-3-phospho-glycerate + a ribonucleoside 5'-diphosphate + H(+). It carries out the reaction (2R)-3-phosphoglycerate + UDP-alpha-D-glucose = (2R)-2-O-(alpha-D-glucopyranosyl)-3-phospho-glycerate + UDP + H(+). The enzyme catalyses ADP-alpha-D-glucose + (2R)-3-phosphoglycerate = (2R)-2-O-(alpha-D-glucopyranosyl)-3-phospho-glycerate + ADP + H(+). Inhibited by ADP and EDTA. Involved in the biosynthesis of the compatible solute mannosylglucosylglycerate through a phosphorylating pathway. Catalyzes the transfer of the glucose moiety from a nuleotide sugar such as UDP-alpha-D-glucose to the position 2 of 3-phospho-D-glycerate (3-PGA) to form glucosyl-3-phosphoglycerate (GPG). UDP-glucose is the preferred substrate, but it can be partially replaced by ADP-glucose. This is Glucosyl-3-phosphoglycerate synthase from Petrotoga mobilis (strain DSM 10674 / SJ95).